An 82-amino-acid polypeptide reads, in one-letter code: UPF0729 protein C18orf32 homolog (82 aa).

The segment at 1–37 (MVCIPCIVIPVLLWVYKKFLEPIVYPFISPIINRIWP) is necessary for its localzation to the endoplasmic reticulum and lipid droplets. The interval 46–82 (TSAKKEESNGTCKASGTSITNGSVSRGEEAVPDKKTD) is disordered. Over residues 54 to 69 (NGTCKASGTSITNGSV) the composition is skewed to polar residues. Over residues 71–82 (RGEEAVPDKKTD) the composition is skewed to basic and acidic residues.

Belongs to the UPF0729 family.

Its subcellular location is the endoplasmic reticulum. It is found in the lipid droplet. The polypeptide is UPF0729 protein C18orf32 homolog (Xenopus tropicalis (Western clawed frog)).